Consider the following 159-residue polypeptide: Small ribosomal subunit protein uS7c (159 aa).

A disordered region spans residues 137–159 (HAIRKKEETHKMAESNRAXAHYR). Positions 141–150 (KKEETHKMAE) are enriched in basic and acidic residues.

This sequence belongs to the universal ribosomal protein uS7 family. As to quaternary structure, part of the 30S ribosomal subunit.

Its subcellular location is the plastid. The protein resides in the chloroplast. Its function is as follows. One of the primary rRNA binding proteins, it binds directly to 16S rRNA where it nucleates assembly of the head domain of the 30S subunit. The chain is Small ribosomal subunit protein uS7c (rps7) from Sciadopitys verticillata (Japanese umbrella-pine).